A 313-amino-acid chain; its full sequence is Adhesin MafA 2 (313 aa).

The N-terminal stretch at 1–14 (MKTLLLLIPLVLTA) is a signal peptide. C15 is lipidated: N-palmitoyl cysteine. C15 carries the S-diacylglycerol cysteine lipid modification. Polar residues predominate over residues 282 to 297 (GDTTAQNRPDFKQNNG). The interval 282 to 313 (GDTTAQNRPDFKQNNGKKPDVGNEVIRRRKGG) is disordered.

This sequence belongs to the MafA family.

Its subcellular location is the cell outer membrane. The protein is Adhesin MafA 2 (mafA2) of Neisseria meningitidis serogroup C / serotype 2a (strain ATCC 700532 / DSM 15464 / FAM18).